The following is a 330-amino-acid chain: Ferredoxin--NADP reductase (330 aa).

FAD is bound by residues Glu-35, Gln-43, Tyr-48, Val-90, Phe-123, Asp-285, and Thr-326.

It belongs to the ferredoxin--NADP reductase type 2 family. As to quaternary structure, homodimer. The cofactor is FAD.

It carries out the reaction 2 reduced [2Fe-2S]-[ferredoxin] + NADP(+) + H(+) = 2 oxidized [2Fe-2S]-[ferredoxin] + NADPH. In Streptococcus pyogenes serotype M6 (strain ATCC BAA-946 / MGAS10394), this protein is Ferredoxin--NADP reductase.